The primary structure comprises 337 residues: Anthranilate phosphoribosyltransferase (337 aa).

5-phospho-alpha-D-ribose 1-diphosphate contacts are provided by residues Gly81, Gly84 to Asp85, Ser89, Asn91 to Thr94, Lys109 to Ser117, and Ala121. Gly81 provides a ligand contact to anthranilate. Residue Ser93 participates in Mg(2+) binding. Asn112 contacts anthranilate. Arg167 is an anthranilate binding site. Mg(2+)-binding residues include Asp226 and Glu227.

This sequence belongs to the anthranilate phosphoribosyltransferase family. In terms of assembly, homodimer. The cofactor is Mg(2+).

The catalysed reaction is N-(5-phospho-beta-D-ribosyl)anthranilate + diphosphate = 5-phospho-alpha-D-ribose 1-diphosphate + anthranilate. The protein operates within amino-acid biosynthesis; L-tryptophan biosynthesis; L-tryptophan from chorismate: step 2/5. Its function is as follows. Catalyzes the transfer of the phosphoribosyl group of 5-phosphorylribose-1-pyrophosphate (PRPP) to anthranilate to yield N-(5'-phosphoribosyl)-anthranilate (PRA). The chain is Anthranilate phosphoribosyltransferase from Methylobacterium sp. (strain 4-46).